A 660-amino-acid polypeptide reads, in one-letter code: uncharacterized protein (660 aa).

A disordered region spans residues 1–660 (MGTPCQSARG…RNPGCPRTWR (660 aa)). Positions 67-80 (RPGGGNRVGAGRGR) are enriched in gly residues. The span at 104–116 (SNPTGGCSDPQRS) shows a compositional bias: polar residues. 4 consecutive repeat copies span residues 149–273 (SARN…GCPR), 274–398 (SARN…GCPR), 399–523 (SARN…GCPR), and 524–648 (SARN…GCPR). The 4 X 125 AA tandem repeats stretch occupies residues 149–648 (SARNPGCPRT…THRRPPGCPR (500 aa)). Composition is skewed to low complexity over residues 177–196 (RPSG…GTPA), 302–321 (RPSG…GTPA), 427–446 (RPSG…GTPA), and 552–571 (RPSG…GTPA).

This is an uncharacterized protein from Homo sapiens (Human).